The chain runs to 218 residues: Lactosylceramide 4-alpha-galactosyltransferase (218 aa).

Residues 57-59 (DTD) carry the DXD motif motif.

This sequence belongs to the glycosyltransferase 32 family.

The protein resides in the golgi apparatus membrane. The catalysed reaction is a beta-D-Gal-(1-&gt;4)-beta-D-Glc-(1&lt;-&gt;1)-Cer(d18:1(4E)) + UDP-alpha-D-galactose = a globoside Gb3Cer (d18:1(4E)) + UDP + H(+). It catalyses the reaction a beta-D-Gal-(1&lt;-&gt;1')-ceramide + UDP-alpha-D-galactose = alpha-D-Gal-(1-&gt;4)-beta-D-Gal-(1&lt;-&gt;1')-Cer + UDP + H(+). It participates in glycolipid biosynthesis. In terms of biological role, catalyzes the transfer of galactose from UDP-alpha-D-galactose to lactosylceramide/beta-D-galactosyl-(1-&gt;4)-beta-D-glucosyl-(1&lt;-&gt;1)-ceramide(d18:1(4E)) to produce globotriaosylceramide/globoside Gb3Cer (d18:1(4E)). Also able to transfer galactose to galactosylceramide/beta-D-Gal-(1&lt;-&gt;1')-Cer. Globoside Gb3Cer is a glycosphingolipid of the globo serie, one of the major types of neutral root structures of glycosphingolipids, that constitute a significant portion of mammalian cell membranes. This is Lactosylceramide 4-alpha-galactosyltransferase (A4GALT) from Pongo pygmaeus (Bornean orangutan).